Reading from the N-terminus, the 277-residue chain is Glutamate racemase (277 aa).

Substrate-binding positions include 13-14 (DS) and 45-46 (YG). Cys77 acts as the Proton donor/acceptor in catalysis. 78–79 (NT) contacts substrate. Residue Cys192 is the Proton donor/acceptor of the active site. 193 to 194 (TH) serves as a coordination point for substrate.

This sequence belongs to the aspartate/glutamate racemases family.

It carries out the reaction L-glutamate = D-glutamate. It participates in cell wall biogenesis; peptidoglycan biosynthesis. In terms of biological role, provides the (R)-glutamate required for cell wall biosynthesis. The polypeptide is Glutamate racemase (Rhizobium meliloti (strain 1021) (Ensifer meliloti)).